The sequence spans 229 residues: Probable methylthioribulose-1-phosphate dehydratase (229 aa).

Cysteine 97 serves as a coordination point for substrate. Zn(2+)-binding residues include histidine 115 and histidine 117. The active-site Proton donor/acceptor is the glutamate 139. Position 195 (histidine 195) interacts with Zn(2+).

This sequence belongs to the aldolase class II family. MtnB subfamily. Requires Zn(2+) as cofactor.

Its subcellular location is the cytoplasm. The catalysed reaction is 5-(methylsulfanyl)-D-ribulose 1-phosphate = 5-methylsulfanyl-2,3-dioxopentyl phosphate + H2O. The protein operates within amino-acid biosynthesis; L-methionine biosynthesis via salvage pathway; L-methionine from S-methyl-5-thio-alpha-D-ribose 1-phosphate: step 2/6. Its function is as follows. Catalyzes the dehydration of methylthioribulose-1-phosphate (MTRu-1-P) into 2,3-diketo-5-methylthiopentyl-1-phosphate (DK-MTP-1-P). The polypeptide is Probable methylthioribulose-1-phosphate dehydratase (Acyrthosiphon pisum (Pea aphid)).